We begin with the raw amino-acid sequence, 818 residues long: Glycogen phosphorylase (818 aa).

Lys-667 is modified (N6-(pyridoxal phosphate)lysine).

The protein belongs to the glycogen phosphorylase family. Pyridoxal 5'-phosphate is required as a cofactor.

The catalysed reaction is [(1-&gt;4)-alpha-D-glucosyl](n) + phosphate = [(1-&gt;4)-alpha-D-glucosyl](n-1) + alpha-D-glucose 1-phosphate. Phosphorylase is an important allosteric enzyme in carbohydrate metabolism. Enzymes from different sources differ in their regulatory mechanisms and in their natural substrates. However, all known phosphorylases share catalytic and structural properties. The chain is Glycogen phosphorylase (glgP) from Pasteurella multocida (strain Pm70).